We begin with the raw amino-acid sequence, 379 residues long: Cytochrome b (379 aa).

A run of 4 helical transmembrane segments spans residues 34–54 (FGSLLGICLITQILTGLLLAM), 78–99 (WLIRNLHANGASFFFICIYFHI), 114–134 (WNTGIILLLTLMATAFVGYVL), and 179–199 (FFALHFLLPFLIAGITLIHLT). Heme b is bound by residues His-84 and His-98. Heme b contacts are provided by His-183 and His-197. His-202 contributes to the a ubiquinone binding site. Helical transmembrane passes span 227 to 247 (LKDILGFTLMLIPLLTLTFFS), 289 to 309 (LGGVLALAASVLILFLTPLLH), 321 to 341 (FSQVLFWLLVANLLILTWVGS), and 348 to 368 (FIAIGQMASFTYFLILLVLFP).

The protein belongs to the cytochrome b family. In terms of assembly, the cytochrome bc1 complex contains 11 subunits: 3 respiratory subunits (MT-CYB, CYC1 and UQCRFS1), 2 core proteins (UQCRC1 and UQCRC2) and 6 low-molecular weight proteins (UQCRH/QCR6, UQCRB/QCR7, UQCRQ/QCR8, UQCR10/QCR9, UQCR11/QCR10 and a cleavage product of UQCRFS1). This cytochrome bc1 complex then forms a dimer. Heme b is required as a cofactor.

The protein localises to the mitochondrion inner membrane. Component of the ubiquinol-cytochrome c reductase complex (complex III or cytochrome b-c1 complex) that is part of the mitochondrial respiratory chain. The b-c1 complex mediates electron transfer from ubiquinol to cytochrome c. Contributes to the generation of a proton gradient across the mitochondrial membrane that is then used for ATP synthesis. The protein is Cytochrome b (MT-CYB) of Apteryx australis (Southern brown kiwi).